Consider the following 227-residue polypeptide: Probable septum site-determining protein MinC (227 aa).

The protein belongs to the MinC family. Interacts with MinD and FtsZ.

Cell division inhibitor that blocks the formation of polar Z ring septums. Rapidly oscillates between the poles of the cell to destabilize FtsZ filaments that have formed before they mature into polar Z rings. Prevents FtsZ polymerization. This chain is Probable septum site-determining protein MinC, found in Clostridioides difficile (strain 630) (Peptoclostridium difficile).